The chain runs to 413 residues: MAVNFPSIDPAQLHPVAGVTLGWAEANIRKPNRKDVLVVSVEEGATVSGVFTENRFCAAPVTVCREHLAKVRAGGAGIRALVVNTGNANAGTGEPGLAHARETCAELARLAGIAPGQVLPFSTGVILEPLPIERLKAGLPAALANRAAANWHDAAQAIMTTDTLPKAASRQVTIDGHTITLTGISKGAGMIKPNMATMLGFLAFDAKVAQPVLDALAKDVADHSFNCITIDGDTSTNDSFILIASGKASLPQIASTDSPAYAALREAVTAVAQALAQLIVRDGEGATKFITVTVEGGKSAAECRQIAYAIGHSPLVKTAFYASDPNLGRILAAIGYAGVADLDVGKIDLYLDDVLVAKAGGRNPAYLEEDGQRVMKQSEIAVRVLLGRGDAQATIWTCDLSHDYVSINADYRS.

Thr-160, Lys-186, Thr-197, Glu-284, Asn-408, and Ser-413 together coordinate substrate. Catalysis depends on Thr-197, which acts as the Nucleophile.

It belongs to the ArgJ family. In terms of assembly, heterotetramer of two alpha and two beta chains.

Its subcellular location is the cytoplasm. The enzyme catalyses N(2)-acetyl-L-ornithine + L-glutamate = N-acetyl-L-glutamate + L-ornithine. It catalyses the reaction L-glutamate + acetyl-CoA = N-acetyl-L-glutamate + CoA + H(+). It participates in amino-acid biosynthesis; L-arginine biosynthesis; L-ornithine and N-acetyl-L-glutamate from L-glutamate and N(2)-acetyl-L-ornithine (cyclic): step 1/1. It functions in the pathway amino-acid biosynthesis; L-arginine biosynthesis; N(2)-acetyl-L-ornithine from L-glutamate: step 1/4. In terms of biological role, catalyzes two activities which are involved in the cyclic version of arginine biosynthesis: the synthesis of N-acetylglutamate from glutamate and acetyl-CoA as the acetyl donor, and of ornithine by transacetylation between N(2)-acetylornithine and glutamate. This Burkholderia pseudomallei (strain K96243) protein is Arginine biosynthesis bifunctional protein ArgJ.